The chain runs to 648 residues: DNA ligase (648 aa).

NAD(+) contacts are provided by residues 30-34, 79-80, and Glu108; these read DEEYD and SM. Lys110 acts as the N6-AMP-lysine intermediate in catalysis. The NAD(+) site is built by Arg131, Glu165, Lys280, and Lys304. The Zn(2+) site is built by Cys398, Cys401, Cys414, and Cys419. In terms of domain architecture, BRCT spans 573–648; the sequence is AKENPFKGKI…LTEDEMRAML (76 aa).

Belongs to the NAD-dependent DNA ligase family. LigA subfamily. It depends on Mg(2+) as a cofactor. Mn(2+) serves as cofactor.

The enzyme catalyses NAD(+) + (deoxyribonucleotide)n-3'-hydroxyl + 5'-phospho-(deoxyribonucleotide)m = (deoxyribonucleotide)n+m + AMP + beta-nicotinamide D-nucleotide.. DNA ligase that catalyzes the formation of phosphodiester linkages between 5'-phosphoryl and 3'-hydroxyl groups in double-stranded DNA using NAD as a coenzyme and as the energy source for the reaction. It is essential for DNA replication and repair of damaged DNA. The protein is DNA ligase of Sulfurovum sp. (strain NBC37-1).